The sequence spans 156 residues: Lipoprotein signal peptidase (156 aa).

3 helical membrane-spanning segments follow: residues 5 to 25, 64 to 84, and 89 to 109; these read FKFI…DQWV, YLHL…KTLL, and IAFG…FIYG. Active-site residues include D113 and D130. The helical transmembrane segment at 122-142 threads the bilayer; that stretch reads NFAIFNVADVMINISVALILI.

This sequence belongs to the peptidase A8 family.

The protein localises to the cell inner membrane. The enzyme catalyses Release of signal peptides from bacterial membrane prolipoproteins. Hydrolyzes -Xaa-Yaa-Zaa-|-(S,diacylglyceryl)Cys-, in which Xaa is hydrophobic (preferably Leu), and Yaa (Ala or Ser) and Zaa (Gly or Ala) have small, neutral side chains.. Its pathway is protein modification; lipoprotein biosynthesis (signal peptide cleavage). This protein specifically catalyzes the removal of signal peptides from prolipoproteins. This chain is Lipoprotein signal peptidase, found in Campylobacter jejuni subsp. doylei (strain ATCC BAA-1458 / RM4099 / 269.97).